Here is a 410-residue protein sequence, read N- to C-terminus: Elongation factor Tu, chloroplastic (410 aa).

Residues 10-214 (KPHVNIGTIG…QVDAYIPTPE (205 aa)) form the tr-type G domain. Positions 19–26 (GHVDHGKT) are G1. Residue 19–26 (GHVDHGKT) coordinates GTP. Thr26 is a Mg(2+) binding site. Positions 60–64 (GITIN) are G2. Residues 81-84 (DCPG) form a G3 region. Residues 81-85 (DCPGH) and 136-139 (NKED) contribute to the GTP site. Positions 136–139 (NKED) are G4. The tract at residues 174 to 176 (SAL) is G5.

It belongs to the TRAFAC class translation factor GTPase superfamily. Classic translation factor GTPase family. EF-Tu/EF-1A subfamily.

Its subcellular location is the plastid. It localises to the chloroplast. It carries out the reaction GTP + H2O = GDP + phosphate + H(+). In terms of biological role, GTP hydrolase that promotes the GTP-dependent binding of aminoacyl-tRNA to the A-site of ribosomes during protein biosynthesis. This chain is Elongation factor Tu, chloroplastic (tufA), found in Chlorokybus atmophyticus (Soil alga).